We begin with the raw amino-acid sequence, 333 residues long: Putative ketol-acid reductoisomerase 2 (333 aa).

One can recognise a KARI N-terminal Rossmann domain in the interval 1-182 (MDKTVLDANL…AIPGGIAVIS (182 aa)). The KARI C-terminal knotted domain maps to 183 to 329 (SFEEEALLDL…KELYKLLGRK (147 aa)).

The protein belongs to the ketol-acid reductoisomerase family.

The catalysed reaction is (2R)-2,3-dihydroxy-3-methylbutanoate + NADP(+) = (2S)-2-acetolactate + NADPH + H(+). The enzyme catalyses (2R,3R)-2,3-dihydroxy-3-methylpentanoate + NADP(+) = (S)-2-ethyl-2-hydroxy-3-oxobutanoate + NADPH + H(+). Its pathway is amino-acid biosynthesis; L-isoleucine biosynthesis; L-isoleucine from 2-oxobutanoate: step 2/4. It functions in the pathway amino-acid biosynthesis; L-valine biosynthesis; L-valine from pyruvate: step 2/4. The chain is Putative ketol-acid reductoisomerase 2 (ilvC2) from Saccharolobus solfataricus (strain ATCC 35092 / DSM 1617 / JCM 11322 / P2) (Sulfolobus solfataricus).